Here is a 61-residue protein sequence, read N- to C-terminus: Large ribosomal subunit protein bL33 (61 aa).

The protein belongs to the bacterial ribosomal protein bL33 family.

This is Large ribosomal subunit protein bL33 from Amoebophilus asiaticus (strain 5a2).